Here is a 129-residue protein sequence, read N- to C-terminus: Fluoride-specific ion channel FluC 2 (129 aa).

Transmembrane regions (helical) follow at residues 3 to 23, 32 to 52, 59 to 79, and 90 to 110; these read FLYVGIFGALGGMCRYAMNLW, ATLAVNLIGCFLLAFIMPFLA, LVLLNGIGTGFIGAFTTFSAF, and GEVVLAISYILVSLIGGLVMV. Residues G71 and T74 each coordinate Na(+).

Belongs to the fluoride channel Fluc/FEX (TC 1.A.43) family.

It is found in the cell membrane. The enzyme catalyses fluoride(in) = fluoride(out). With respect to regulation, na(+) is not transported, but it plays an essential structural role and its presence is essential for fluoride channel function. Its function is as follows. Fluoride-specific ion channel. Important for reducing fluoride concentration in the cell, thus reducing its toxicity. In Listeria innocua serovar 6a (strain ATCC BAA-680 / CLIP 11262), this protein is Fluoride-specific ion channel FluC 2.